Reading from the N-terminus, the 491-residue chain is Katanin p60 ATPase-containing subunit A1 (491 aa).

Residues 1–29 (MSLLMISENVKLAREYALLGNYDSAMVYY) form an interaction with KATNB1 region. Residues 1 to 75 (MSLLMISENV…VKDIMKTLES (75 aa)) are interaction with dynein and NDEL1. An interaction with microtubules region spans residues 1–185 (MSLLMISENV…EPETNKFDST (185 aa)). Phosphoserine; by DYRK2 is present on residues S42 and S109. Positions 87–185 (QHDLPASEGE…EPETNKFDST (99 aa)) are disordered. Residues 117-144 (SSQYSDPKSHGNRPSTTVRVHRSSAQNV) are compositionally biased toward polar residues. T133 carries the post-translational modification Phosphothreonine; by DYRK2. Residues 145 to 169 (HNDRGKAVRCREKKEQNKGREEKNK) show a composition bias toward basic and acidic residues. Phosphoserine is present on S170. An ATP-binding site is contributed by 249–256 (GPPGTGKT).

This sequence belongs to the AAA ATPase family. Katanin p60 subunit A1 subfamily. Can homooligomerize into hexameric rings, which may be promoted by interaction with microtubules. Interacts with KATNB1, which may serve as a targeting subunit. Interacts with ASPM; the katanin complex formation KATNA1:KATNB1 is required for the association of ASPM. Interacts with dynein and NDEL1. Associates with the E3 ligase complex containing DYRK2, EDD/UBR5, DDB1 and DCAF1 proteins (EDVP complex). Interacts with KLHL42 (via the kelch domains). Interacts with CUL3; the interaction is enhanced by KLHL42. Interacts with KATNB1 and KATNBL1. Interacts with CAMSAP2 and CAMSAP3; leading to regulate the length of CAMSAP-decorated microtubule stretches. Phosphorylation by DYRK2 triggers ubiquitination and subsequent degradation. Post-translationally, ubiquitinated by the BCR(KLHL42) E3 ubiquitin ligase complex, leading to its proteasomal degradation. Ubiquitinated by the EDVP E3 ligase complex and subsequently targeted for proteasomal degradation.

It is found in the cytoplasm. Its subcellular location is the midbody. The protein resides in the cytoskeleton. It localises to the microtubule organizing center. The protein localises to the centrosome. It is found in the spindle pole. Its subcellular location is the spindle. The catalysed reaction is n ATP + n H2O + a microtubule = n ADP + n phosphate + (n+1) alpha/beta tubulin heterodimers.. With respect to regulation, ATPase activity is stimulated by microtubules, which promote homooligomerization. ATP-dependent microtubule severing is stimulated by interaction with KATNB1. Functionally, catalytic subunit of a complex which severs microtubules in an ATP-dependent manner. Microtubule severing may promote rapid reorganization of cellular microtubule arrays and the release of microtubules from the centrosome following nucleation. Microtubule release from the mitotic spindle poles may allow depolymerization of the microtubule end proximal to the spindle pole, leading to poleward microtubule flux and poleward motion of chromosome. Microtubule release within the cell body of neurons may be required for their transport into neuronal processes by microtubule-dependent motor proteins. This transport is required for axonal growth. The polypeptide is Katanin p60 ATPase-containing subunit A1 (Homo sapiens (Human)).